A 1781-amino-acid polypeptide reads, in one-letter code: Atrochrysone carboxylic acid synthase (1781 aa).

Positions 15–253 (TRDLFRRLHV…KHVALPVYAG (239 aa)) are N-terminal acylcarrier protein transacylase domain (SAT). The Ketosynthase family 3 (KS3) domain maps to 390 to 823 (QSKIAIVGMA…GGNTSVVVEE (434 aa)). Catalysis depends on for beta-ketoacyl synthase activity residues cysteine 563, histidine 698, and histidine 741. Residues 925 to 1244 (FAFTGQGASH…SLGLLHCAGL (320 aa)) are malonyl-CoA:ACP transacylase (MAT) domain. The tract at residues 1312–1631 (TSTVQQIIEE…RVLLNRFFSA (320 aa)) is product template (PT) domain. The N-terminal hotdog fold stretch occupies residues 1316 to 1451 (QQIIEETFSD…ADIVYGLPTD (136 aa)). A PKS/mFAS DH domain is found at 1316–1626 (QQIIEETFSD…FRRYPRVLLN (311 aa)). Histidine 1348 acts as the Proton acceptor; for dehydratase activity in catalysis. The C-terminal hotdog fold stretch occupies residues 1478 to 1626 (IANRLSHNMA…FRRYPRVLLN (149 aa)). Aspartate 1537 acts as the Proton donor; for dehydratase activity in catalysis. A disordered region spans residues 1633-1653 (DSDTSKHTSATDVSPPKKVVQ). A Carrier domain is found at 1703–1780 (VDSDSTASKA…DLKAWLMEYY (78 aa)). O-(pantetheine 4'-phosphoryl)serine is present on serine 1740.

The catalysed reaction is holo-[ACP] + 8 malonyl-CoA + 8 H(+) = atrochrysone carboxyl-[ACP] + 8 CO2 + 8 CoA + 2 H2O. Its pathway is secondary metabolite biosynthesis. In terms of biological role, atrochrysone carboxylic acid synthase; part of the gene cluster that mediates the biosynthesis of the dimeric xanthones cryptosporioptides. The pathway begins with the synthesis of atrochrysone thioester by the polyketide synthase dmx-nrPKS. The atrochrysone carboxyl ACP thioesterase dmxR1 then breaks the thioester bond and releases the atrochrysone carboxylic acid from dmx-nrPKS. Atrochrysone carboxylic acid is decarboxylated by the decarboxylase dmxR15, and oxidized by the anthrone oxygenase dmxR16 to yield emodin. Emodin is then reduced to emodin hydroquinone by the oxidoreductase dmxR7. A-ring reduction by the short chain dehydrogenase dmxR18, dehydration by the scytalone dehydratase-like protein dmxR17 and probable spontaneous re-oxidation, results in overall deoxygenation to chrysophanol. Baeyer-Villiger oxidation by the Baeyer-Villiger monooxygenase (BVMO) dmxR6 then yields monodictylactone in equilibrium with monodictyphenone. In the case of the cryptosporioptides biosynthesis, monodictylactone is reduced at C-12 to an alcohol (by the short chain dehydrogenases dmxR12 or dmxR8) and hydroxylated at C-5 by dmxR9, yielding the electron-rich aromatic which could eliminate H(2)O to form the ortho-quinonemethide, followed by tautomerisation to paraquinone and complete the formal reduction to produce the 10-methylgroup. Conjugate addition of C-4a-OH to the resulting paraquinone by the monooxygenase dmxR10 then gives cyclohexadienone, which is then reduced at C-5 by the short chain dehydrogenase dmxR3 to give the dihydroxanthone. The 6,7-epoxide in the cryptosporioptides could be introduced by the cytochrome P450 monooxygenase dmxL3. The highly reducing PKS dmxL2 manufactures butyrate, which is further carboxylated by dmxL1 to form ethylmalonate. It is not yet clear whether the carboxylation occurs while the butyrate is attached to the ACP of dmxL2, but this unusual fungal metabolite could then be esterified to O-5 by the O-acetyltransferase dmxR13. Finally, dimerization performed by dmxR5 gives the observed dimers cryptosporioptides A, B and C as the final products of the pathway. This chain is Atrochrysone carboxylic acid synthase, found in Cryptosporiopsis sp. (strain 8999).